The primary structure comprises 123 residues: Large ribosomal subunit protein uL14 (123 aa).

Belongs to the universal ribosomal protein uL14 family. As to quaternary structure, part of the 50S ribosomal subunit. Forms a cluster with proteins L3 and L19. In the 70S ribosome, L14 and L19 interact and together make contacts with the 16S rRNA in bridges B5 and B8.

Functionally, binds to 23S rRNA. Forms part of two intersubunit bridges in the 70S ribosome. This is Large ribosomal subunit protein uL14 from Histophilus somni (strain 129Pt) (Haemophilus somnus).